The primary structure comprises 297 residues: ATP synthase gamma chain (297 aa).

Belongs to the ATPase gamma chain family. In terms of assembly, F-type ATPases have 2 components, CF(1) - the catalytic core - and CF(0) - the membrane proton channel. CF(1) has five subunits: alpha(3), beta(3), gamma(1), delta(1), epsilon(1). CF(0) has three main subunits: a, b and c.

The protein resides in the cell membrane. Functionally, produces ATP from ADP in the presence of a proton gradient across the membrane. The gamma chain is believed to be important in regulating ATPase activity and the flow of protons through the CF(0) complex. This is ATP synthase gamma chain from Arthrobacter sp. (strain FB24).